Reading from the N-terminus, the 1654-residue chain is Mediator of RNA polymerase II transcription subunit 12 (1654 aa).

2 disordered regions span residues 52–72 (DLNG…LSGN) and 1481–1530 (SKQT…SFQT). A compositionally biased stretch (polar residues) spans 1515–1530 (PLSSARPSSEAASFQT).

This sequence belongs to the Mediator complex subunit 12 family. In terms of assembly, component of the SRB8-11 complex, which itself associates with the Mediator complex.

The protein localises to the nucleus. Functionally, component of the SRB8-11 complex. The SRB8-11 complex is a regulatory module of the Mediator complex which is itself involved in regulation of basal and activated RNA polymerase II-dependent transcription. The SRB8-11 complex may be involved in the transcriptional repression of a subset of genes regulated by Mediator. It may inhibit the association of the Mediator complex with RNA polymerase II to form the holoenzyme complex. This chain is Mediator of RNA polymerase II transcription subunit 12 (SRB8), found in Scheffersomyces stipitis (strain ATCC 58785 / CBS 6054 / NBRC 10063 / NRRL Y-11545) (Yeast).